Consider the following 379-residue polypeptide: UPF0450 protein C17orf58 homolog (379 aa).

The signal sequence occupies residues 1–17 (MIPALTVPLLFLCATSA). Disordered regions lie at residues 76-95 (RTRA…PDKT) and 162-194 (TASQ…MNPH). The span at 180–194 (SMDHESNRPGKMNPH) shows a compositional bias: basic and acidic residues. 3 disulfides stabilise this stretch: cysteine 234/cysteine 308, cysteine 238/cysteine 312, and cysteine 249/cysteine 378. Residues 234-378 (CIAECHRDKD…KVLAAAHSKC (145 aa)) form the NTR domain.

The protein belongs to the UPF0450 family.

The polypeptide is UPF0450 protein C17orf58 homolog (Xenopus laevis (African clawed frog)).